The sequence spans 366 residues: MTHTTPLLPLAPPINLVDLRYNELHNAITAFGEPPFRAKQIHEWLFSHHANSFAAMSSLPLRLREKLAERFTLQRPEVVEVQESCESGCLRPTRKILLKLSDGALIECVLIPAEERMTACLSSQAGCPMQCTFCATGTMGLQRNLSAGEIWEQLYALNGLALQEGKTITNVVFMGMGEPLLNTDNVLEAIATMSSRNYNLSLSQRKITISTVGIVPEIERLSRSGLKTKLAVSLHSARQEVRQQLMPIAAERYPLPLLSKSLEAYSKATGEAITIVYMMLNGVNDSKEDAHLLARYCRHFSCKINLIDYNPILTIRFGSVQESQKNEFQAYLMAQKFHVTVRKSYGASVNAACGQLVTQQQRRTIK.

The active-site Proton acceptor is the Glu-107. The region spanning 113–342 (AEERMTACLS…MAQKFHVTVR (230 aa)) is the Radical SAM core domain. Cysteines 120 and 353 form a disulfide. The [4Fe-4S] cluster site is built by Cys-127, Cys-131, and Cys-134. S-adenosyl-L-methionine-binding positions include 177-178 (GE), Ser-210, 233-235 (SLH), and Asn-310. Cys-353 serves as the catalytic S-methylcysteine intermediate.

It belongs to the radical SAM superfamily. RlmN family. Requires [4Fe-4S] cluster as cofactor.

It localises to the cytoplasm. The enzyme catalyses adenosine(2503) in 23S rRNA + 2 reduced [2Fe-2S]-[ferredoxin] + 2 S-adenosyl-L-methionine = 2-methyladenosine(2503) in 23S rRNA + 5'-deoxyadenosine + L-methionine + 2 oxidized [2Fe-2S]-[ferredoxin] + S-adenosyl-L-homocysteine. It carries out the reaction adenosine(37) in tRNA + 2 reduced [2Fe-2S]-[ferredoxin] + 2 S-adenosyl-L-methionine = 2-methyladenosine(37) in tRNA + 5'-deoxyadenosine + L-methionine + 2 oxidized [2Fe-2S]-[ferredoxin] + S-adenosyl-L-homocysteine. Functionally, specifically methylates position 2 of adenine 2503 in 23S rRNA and position 2 of adenine 37 in tRNAs. The polypeptide is Probable dual-specificity RNA methyltransferase RlmN (Chlorobium chlorochromatii (strain CaD3)).